Reading from the N-terminus, the 225-residue chain is 2-C-methyl-D-erythritol 4-phosphate cytidylyltransferase (225 aa).

This sequence belongs to the IspD/TarI cytidylyltransferase family. IspD subfamily.

The enzyme catalyses 2-C-methyl-D-erythritol 4-phosphate + CTP + H(+) = 4-CDP-2-C-methyl-D-erythritol + diphosphate. It functions in the pathway isoprenoid biosynthesis; isopentenyl diphosphate biosynthesis via DXP pathway; isopentenyl diphosphate from 1-deoxy-D-xylulose 5-phosphate: step 2/6. Its function is as follows. Catalyzes the formation of 4-diphosphocytidyl-2-C-methyl-D-erythritol from CTP and 2-C-methyl-D-erythritol 4-phosphate (MEP). The chain is 2-C-methyl-D-erythritol 4-phosphate cytidylyltransferase from Prochlorococcus marinus (strain MIT 9313).